Reading from the N-terminus, the 125-residue chain is Ribosome-binding factor A (125 aa).

Belongs to the RbfA family. In terms of assembly, monomer. Binds 30S ribosomal subunits, but not 50S ribosomal subunits or 70S ribosomes.

Its subcellular location is the cytoplasm. In terms of biological role, one of several proteins that assist in the late maturation steps of the functional core of the 30S ribosomal subunit. Associates with free 30S ribosomal subunits (but not with 30S subunits that are part of 70S ribosomes or polysomes). Required for efficient processing of 16S rRNA. May interact with the 5'-terminal helix region of 16S rRNA. This is Ribosome-binding factor A from Carboxydothermus hydrogenoformans (strain ATCC BAA-161 / DSM 6008 / Z-2901).